A 277-amino-acid polypeptide reads, in one-letter code: E3 ubiquitin-protein ligase CCNB1IP1 (277 aa).

The RING-type; atypical zinc-finger motif lies at cysteine 4–cysteine 51. Residues glutamine 127–arginine 182 are a coiled coil.

Interacts with CCNB1, UBE2L3 and NF2. Ubiquitinated; autoubiquitinated. In terms of processing, phosphorylated by CDK1 on serine or threonine residues (in vitro). As to expression, highly expressed in heart. Detected at intermediate levels in liver and kidney, and at low levels in placenta, brain and lung.

The protein resides in the nucleus. It is found in the chromosome. It catalyses the reaction S-ubiquitinyl-[E2 ubiquitin-conjugating enzyme]-L-cysteine + [acceptor protein]-L-lysine = [E2 ubiquitin-conjugating enzyme]-L-cysteine + N(6)-ubiquitinyl-[acceptor protein]-L-lysine.. The protein operates within protein modification; protein ubiquitination. In terms of biological role, ubiquitin E3 ligase that acts as a limiting factor for crossing-over during meiosis: required during zygonema to limit the colocalization of RNF212 with MutS-gamma-associated recombination sites and thereby establish early differentiation of crossover and non-crossover sites. Later, it is directed by MutL-gamma to stably accumulate at designated crossover sites. Probably promotes the dissociation of RNF212 and MutS-gamma to allow the progression of recombination and the implementation of the final steps of crossing over. Modulates cyclin-B levels and participates in the regulation of cell cycle progression through the G2 phase. Overexpression causes delayed entry into mitosis. The polypeptide is E3 ubiquitin-protein ligase CCNB1IP1 (CCNB1IP1) (Homo sapiens (Human)).